A 52-amino-acid polypeptide reads, in one-letter code: uncharacterized protein (52 aa).

A disordered region spans residues 1-52; it reads MSLRPCLTPSSMQYSDIYIPTPTPTHHTHTPTPHPHPHTHTHTHHNPNPTLF. Residues 35–45 are compositionally biased toward basic residues; sequence PHPHTHTHTHH.

This is an uncharacterized protein from Saccharomyces cerevisiae (strain ATCC 204508 / S288c) (Baker's yeast).